Consider the following 805-residue polypeptide: Leucine--tRNA ligase (805 aa).

Residues 40-51 (PYPSGQGLHVGH) carry the 'HIGH' region motif. The 'KMSKS' region motif lies at 576–580 (KMSKS). An ATP-binding site is contributed by lysine 579.

The protein belongs to the class-I aminoacyl-tRNA synthetase family.

It is found in the cytoplasm. The catalysed reaction is tRNA(Leu) + L-leucine + ATP = L-leucyl-tRNA(Leu) + AMP + diphosphate. The protein is Leucine--tRNA ligase of Ligilactobacillus salivarius (strain UCC118) (Lactobacillus salivarius).